The primary structure comprises 156 residues: Small ribosomal subunit protein uS7 (156 aa).

It belongs to the universal ribosomal protein uS7 family. In terms of assembly, part of the 30S ribosomal subunit. Contacts proteins S9 and S11.

Its function is as follows. One of the primary rRNA binding proteins, it binds directly to 16S rRNA where it nucleates assembly of the head domain of the 30S subunit. Is located at the subunit interface close to the decoding center, probably blocks exit of the E-site tRNA. The polypeptide is Small ribosomal subunit protein uS7 (Rhizobium leguminosarum bv. trifolii (strain WSM2304)).